Reading from the N-terminus, the 321-residue chain is Thioredoxin reductase tcpT (321 aa).

FAD contacts are provided by residues 14–17, 36–41, His-49, and Ala-114; these read GGPA and DSGRYR. Cys-138 and Cys-141 are disulfide-bonded. Residues Asp-282 and 289-290 each bind FAD; that span reads NV.

It belongs to the class-II pyridine nucleotide-disulfide oxidoreductase family. Homodimer. FAD is required as a cofactor.

Its pathway is secondary metabolite biosynthesis. Its function is as follows. Thioredoxin reductase; part of the gene cluster that mediates the biosynthesis of an unusual class of epipolythiodioxopiperazines (ETPs) lacking the reactive thiol group important for toxicity. Firstly, L-tyrosine is prenylated by tcpD, before undergoing condensation with L-glycine in a reaction catalyzed by the NRPS tcpP leading to the diketopiperazine (DKP) backbone. Afterwards the alpha-carbon of tyrosine is oxidized by the cytochrome P450 tcpC to form a hydroxyl group. However, in contrast other ETP biosynthesis pathways studied so far, tcpC is not able to bishydroxylate the DKP at both alpha-carbon positions, but hydroxylates the alpha-carbon of the tyrosine part and the nitrogen of the glycine part. The next steps involve an alpha,beta-elimination reaction catalyzed by tcpI, a methylation by the methyltransferase tcpN the action of the four enzyme cascade tcpG/K/J/I. Due to a dysfunctional cytochrome P450 monooxygenase tcpC, the pathway leads to the biosynthesis of probable non-toxic metabolites lacking the reactive thiol group. This is Thioredoxin reductase tcpT from Claviceps purpurea (strain 20.1) (Ergot fungus).